Here is a 77-residue protein sequence, read N- to C-terminus: Dermatoxin-B1 (77 aa).

The signal sequence occupies residues M1–C22. Residues E23–E42 constitute a propeptide that is removed on maturation. The disordered stretch occupies residues S24 to S45. The segment covering E30–S40 has biased composition (acidic residues). Residue Q76 is modified to Glutamine amide.

The protein belongs to the frog skin active peptide (FSAP) family. Dermatoxin subfamily. Highest expression in skin and to a lesser extent in brain and intestine.

The protein localises to the secreted. Its subcellular location is the target cell membrane. In terms of biological role, possesses a potent antimicrobial activity against Gram-positive bacteria B.megaterium, C.glutamicum and S.aureus and mollicutes A.laidlawii and S.melliferum. Less active against Gram-negative bacteria B.cepacia, P.aeruginosa, S.typhimurium and S.meliloti. Probably acts by disturbing membrane functions with its amphipathic structure. In Phyllomedusa bicolor (Two-colored leaf frog), this protein is Dermatoxin-B1.